The sequence spans 440 residues: Ribosomal protein uS12 methylthiotransferase RimO (440 aa).

One can recognise an MTTase N-terminal domain in the interval 6-116; the sequence is PKVGFVSLGC…VVTAVHEVVP (111 aa). Residues C15, C51, C80, C149, C153, and C156 each coordinate [4Fe-4S] cluster. The Radical SAM core domain maps to 135-373; it reads LTPRHYAYLK…MAHQQAISAA (239 aa). The TRAM domain occupies 376 to 440; sequence QLKVGKEIEV…DEYDLWAEPV (65 aa).

Belongs to the methylthiotransferase family. RimO subfamily. [4Fe-4S] cluster serves as cofactor.

The protein localises to the cytoplasm. The catalysed reaction is L-aspartate(89)-[ribosomal protein uS12]-hydrogen + (sulfur carrier)-SH + AH2 + 2 S-adenosyl-L-methionine = 3-methylsulfanyl-L-aspartate(89)-[ribosomal protein uS12]-hydrogen + (sulfur carrier)-H + 5'-deoxyadenosine + L-methionine + A + S-adenosyl-L-homocysteine + 2 H(+). In terms of biological role, catalyzes the methylthiolation of an aspartic acid residue of ribosomal protein uS12. The sequence is that of Ribosomal protein uS12 methylthiotransferase RimO from Pseudomonas paraeruginosa (strain DSM 24068 / PA7) (Pseudomonas aeruginosa (strain PA7)).